A 302-amino-acid chain; its full sequence is 4-hydroxy-tetrahydrodipicolinate synthase (302 aa).

A pyruvate-binding site is contributed by T57. The active-site Proton donor/acceptor is the Y145. The active-site Schiff-base intermediate with substrate is K173. Position 213 (I213) interacts with pyruvate.

Belongs to the DapA family. In terms of assembly, homotetramer; dimer of dimers.

It is found in the cytoplasm. The enzyme catalyses L-aspartate 4-semialdehyde + pyruvate = (2S,4S)-4-hydroxy-2,3,4,5-tetrahydrodipicolinate + H2O + H(+). It functions in the pathway amino-acid biosynthesis; L-lysine biosynthesis via DAP pathway; (S)-tetrahydrodipicolinate from L-aspartate: step 3/4. Catalyzes the condensation of (S)-aspartate-beta-semialdehyde [(S)-ASA] and pyruvate to 4-hydroxy-tetrahydrodipicolinate (HTPA). The polypeptide is 4-hydroxy-tetrahydrodipicolinate synthase (Corynebacterium aurimucosum (strain ATCC 700975 / DSM 44827 / CIP 107346 / CN-1) (Corynebacterium nigricans)).